The chain runs to 252 residues: 3-dehydroquinate dehydratase (252 aa).

3-dehydroquinate is bound by residues S21, 46-48 (EWR), and R82. The active-site Proton donor/acceptor is H143. Catalysis depends on K170, which acts as the Schiff-base intermediate with substrate. R213, S232, and Q236 together coordinate 3-dehydroquinate.

The protein belongs to the type-I 3-dehydroquinase family. In terms of assembly, homodimer.

It carries out the reaction 3-dehydroquinate = 3-dehydroshikimate + H2O. It functions in the pathway metabolic intermediate biosynthesis; chorismate biosynthesis; chorismate from D-erythrose 4-phosphate and phosphoenolpyruvate: step 3/7. Involved in the third step of the chorismate pathway, which leads to the biosynthesis of aromatic amino acids. Catalyzes the cis-dehydration of 3-dehydroquinate (DHQ) and introduces the first double bond of the aromatic ring to yield 3-dehydroshikimate. The sequence is that of 3-dehydroquinate dehydratase from Escherichia coli O127:H6 (strain E2348/69 / EPEC).